We begin with the raw amino-acid sequence, 302 residues long: Polyamine aminopropyltransferase (302 aa).

Residues 4 to 239 (WTWHLEWQTP…GLWGFIYASD (236 aa)) enclose the PABS domain. Glutamine 33 contributes to the S-methyl-5'-thioadenosine binding site. The spermidine site is built by histidine 64 and glutamate 88. S-methyl-5'-thioadenosine contacts are provided by residues aspartate 108 and 140 to 141 (DG). Aspartate 158 serves as the catalytic Proton acceptor. Position 167 (proline 167) interacts with S-methyl-5'-thioadenosine.

This sequence belongs to the spermidine/spermine synthase family. In terms of assembly, homodimer or homotetramer.

It localises to the cytoplasm. It catalyses the reaction S-adenosyl 3-(methylsulfanyl)propylamine + putrescine = S-methyl-5'-thioadenosine + spermidine + H(+). The protein operates within amine and polyamine biosynthesis; spermidine biosynthesis; spermidine from putrescine: step 1/1. Catalyzes the irreversible transfer of a propylamine group from the amino donor S-adenosylmethioninamine (decarboxy-AdoMet) to putrescine (1,4-diaminobutane) to yield spermidine. This Sulfolobus acidocaldarius (strain ATCC 33909 / DSM 639 / JCM 8929 / NBRC 15157 / NCIMB 11770) protein is Polyamine aminopropyltransferase.